The chain runs to 405 residues: Subtilisin-like protease 6 (405 aa).

The signal sequence occupies residues 1–18 (FITKAIPIVLAALSAVNG). A propeptide spanning residues 19 to 125 (AKILEAGPHA…VRTSTNGTNL (107 aa)) is cleaved from the precursor. The Inhibitor I9 domain occupies 34 to 118 (KYIVVMKKDV…YIEPDFVVRT (85 aa)). N-linked (GlcNAc...) asparagine glycosylation is found at Asn121 and Asn124. The Peptidase S8 domain maps to 133-405 (SWGLARVGSK…GEGTTGKLIY (273 aa)). Catalysis depends on charge relay system residues Asp165 and His196. N-linked (GlcNAc...) asparagine glycosylation is found at Asn250 and Asn262. Catalysis depends on Ser356, which acts as the Charge relay system.

The protein belongs to the peptidase S8 family.

It is found in the secreted. Functionally, secreted subtilisin-like serine protease with keratinolytic activity that contributes to pathogenicity. This Trichophyton schoenleinii protein is Subtilisin-like protease 6 (SUB6).